The sequence spans 505 residues: DEAD-box ATP-dependent RNA helicase 41 (505 aa).

An HIT-type zinc finger spans residues 27–56 (GEPKCVICSRYGEYICDETNDDVCSLECKQ). The Q motif motif lies at 110–138 (LTFTSCGLPPKLLLNLETAGYDFPTPIQM). In terms of domain architecture, Helicase ATP-binding spans 141–318 (IPAALTGKSL…GSLAKEIILV (178 aa)). 154–161 (ADTGSGKT) contributes to the ATP binding site. The short motif at 267–270 (DEVD) is the DEAD box element. The Helicase C-terminal domain occupies 342 to 492 (KKQKLFDILR…AIPKELINLT (151 aa)).

Belongs to the DEAD box helicase family. DDX59 subfamily.

It catalyses the reaction ATP + H2O = ADP + phosphate + H(+). This is DEAD-box ATP-dependent RNA helicase 41 (RH41) from Arabidopsis thaliana (Mouse-ear cress).